The following is a 367-amino-acid chain: UDP-N-acetylglucosamine--N-acetylmuramyl-(pentapeptide) pyrophosphoryl-undecaprenol N-acetylglucosamine transferase (367 aa).

Residues 15–17 (TGG), Asn-127, Arg-163, Ser-191, Ile-249, and Gln-294 each bind UDP-N-acetyl-alpha-D-glucosamine.

The protein belongs to the glycosyltransferase 28 family. MurG subfamily.

It is found in the cell inner membrane. It catalyses the reaction di-trans,octa-cis-undecaprenyl diphospho-N-acetyl-alpha-D-muramoyl-L-alanyl-D-glutamyl-meso-2,6-diaminopimeloyl-D-alanyl-D-alanine + UDP-N-acetyl-alpha-D-glucosamine = di-trans,octa-cis-undecaprenyl diphospho-[N-acetyl-alpha-D-glucosaminyl-(1-&gt;4)]-N-acetyl-alpha-D-muramoyl-L-alanyl-D-glutamyl-meso-2,6-diaminopimeloyl-D-alanyl-D-alanine + UDP + H(+). It functions in the pathway cell wall biogenesis; peptidoglycan biosynthesis. Its function is as follows. Cell wall formation. Catalyzes the transfer of a GlcNAc subunit on undecaprenyl-pyrophosphoryl-MurNAc-pentapeptide (lipid intermediate I) to form undecaprenyl-pyrophosphoryl-MurNAc-(pentapeptide)GlcNAc (lipid intermediate II). This Burkholderia cenocepacia (strain HI2424) protein is UDP-N-acetylglucosamine--N-acetylmuramyl-(pentapeptide) pyrophosphoryl-undecaprenol N-acetylglucosamine transferase.